A 138-amino-acid polypeptide reads, in one-letter code: MVAPAARVFLRAVRAALTSTVPDLLCLLARGSPRGLASGRLPLAVHSAQHGPGSGAPWLRIARRALRFVLSKHWGDDCYLTNRLWQDLKPPSHVENGQELRLAPPVQWALQVQGNQLQTAVLCLRMAPPEPAGSRQRI.

A signal peptide spans 1-35 (MVAPAARVFLRAVRAALTSTVPDLLCLLARGSPRG).

Isoform 1 is highly expressed in small intestine, testis and kidney, medium expressed in brain and heart and low expressed in colon; it could not be detected in liver, adrenal gland and pancreas.

The protein resides in the secreted. This is an uncharacterized protein from Homo sapiens (Human).